A 117-amino-acid chain; its full sequence is Ribosome-binding factor A (117 aa).

This sequence belongs to the RbfA family. As to quaternary structure, monomer. Binds 30S ribosomal subunits, but not 50S ribosomal subunits or 70S ribosomes.

The protein localises to the cytoplasm. One of several proteins that assist in the late maturation steps of the functional core of the 30S ribosomal subunit. Associates with free 30S ribosomal subunits (but not with 30S subunits that are part of 70S ribosomes or polysomes). Required for efficient processing of 16S rRNA. May interact with the 5'-terminal helix region of 16S rRNA. This is Ribosome-binding factor A from Leuconostoc citreum (strain KM20).